Reading from the N-terminus, the 365-residue chain is Peptide chain release factor 2 (365 aa).

Gln251 carries the post-translational modification N5-methylglutamine.

The protein belongs to the prokaryotic/mitochondrial release factor family. Post-translationally, methylated by PrmC. Methylation increases the termination efficiency of RF2.

Its subcellular location is the cytoplasm. Functionally, peptide chain release factor 2 directs the termination of translation in response to the peptide chain termination codons UGA and UAA. This is Peptide chain release factor 2 from Campylobacter jejuni subsp. jejuni serotype O:6 (strain 81116 / NCTC 11828).